The sequence spans 614 residues: Zinc metalloproteinase-disintegrin-like Eoc1 (614 aa).

A signal peptide spans 1–19; it reads MQVLLITISLAVLPYLGSS. A propeptide spanning residues 20 to 193 is cleaved from the precursor; that stretch reads IILESGIVND…KASQLNLTPE (174 aa). Position 194 is a pyrrolidone carboxylic acid (glutamine 194). A Peptidase M12B domain is found at 202 to 398; that stretch reads KHIKVAIVAD…KMPQCILIKP (197 aa). Asparagine 268 is a glycosylation site (N-linked (GlcNAc...) asparagine). Intrachain disulfides connect cysteine 313–cysteine 393, cysteine 353–cysteine 377, and cysteine 355–cysteine 360. A Zn(2+)-binding site is contributed by histidine 338. Glutamate 339 is a catalytic residue. Zn(2+) contacts are provided by histidine 342 and histidine 348. N-linked (GlcNAc...) asparagine glycosylation is present at asparagine 376. Positions 406–492 constitute a Disintegrin domain; it reads PPVCGNSLVE…ECPADQFQRN (87 aa). Ca(2+)-binding residues include valine 408, asparagine 411, leucine 413, glutamate 415, glutamate 418, and aspartate 421. 14 disulfides stabilise this stretch: cysteine 409–cysteine 438, cysteine 420–cysteine 433, cysteine 422–cysteine 428, cysteine 432–cysteine 455, cysteine 446–cysteine 452, cysteine 451–cysteine 477, cysteine 464–cysteine 484, cysteine 471–cysteine 503, cysteine 496–cysteine 508, cysteine 515–cysteine 565, cysteine 530–cysteine 576, cysteine 543–cysteine 553, cysteine 560–cysteine 602, and cysteine 596–cysteine 607. The D/ECD-tripeptide motif lies at 470 to 472; it reads ECD. N-linked (GlcNAc...) asparagine glycosylation is present at asparagine 498.

This sequence belongs to the venom metalloproteinase (M12B) family. P-III subfamily. P-IIIc sub-subfamily. Heterodimer; disulfide-linked. Zn(2+) serves as cofactor. In terms of tissue distribution, expressed by the venom gland.

The protein resides in the secreted. Its function is as follows. This metalloproteinase hydrolyzes azocasein, and oxidized insulin B-chain. Also hydrolyzes the alpha-chain (FGA) and more slowly the beta-chain of fibrinogen (FGB), without affecting the gamma-chain. Does not cleave fibrin. Inhibits endothelial cell adhesion to extracellular matrix proteins such as fibrinogen, fibronectin, vitronectin, collagen I, and collagen IV. Induces apoptosis in vascular endothelial cells. This chain is Zinc metalloproteinase-disintegrin-like Eoc1 (Svmp3-Eoc1), found in Echis ocellatus (Ocellated saw-scaled viper).